We begin with the raw amino-acid sequence, 358 residues long: Protein-glutamate methylesterase/protein-glutamine glutaminase 3 (358 aa).

Residues 2–118 (KILVVDDSAL…CGRLQEVAPL (117 aa)) form the Response regulatory domain. Asp52 is subject to 4-aspartylphosphate. The CheB-type methylesterase domain occupies 155–325 (NNEDHQLAIM…VPSMPEALLK (171 aa)). Catalysis depends on residues Ser167, His194, and Asp291.

The protein belongs to the CheB family. Phosphorylated by CheA. Phosphorylation of the N-terminal regulatory domain activates the methylesterase activity.

The protein localises to the cytoplasm. The enzyme catalyses [protein]-L-glutamate 5-O-methyl ester + H2O = L-glutamyl-[protein] + methanol + H(+). The catalysed reaction is L-glutaminyl-[protein] + H2O = L-glutamyl-[protein] + NH4(+). In terms of biological role, involved in chemotaxis. Part of a chemotaxis signal transduction system that modulates chemotaxis in response to various stimuli. Catalyzes the demethylation of specific methylglutamate residues introduced into the chemoreceptors (methyl-accepting chemotaxis proteins or MCP) by CheR. Also mediates the irreversible deamidation of specific glutamine residues to glutamic acid. This is Protein-glutamate methylesterase/protein-glutamine glutaminase 3 from Vibrio cholerae serotype O1 (strain ATCC 39315 / El Tor Inaba N16961).